The sequence spans 1888 residues: Fatty acid synthase subunit alpha (1888 aa).

The interval 98–118 is disordered; sequence DLAPVEEPNAEEQTGAAATPA. Residues 146 to 221 enclose the Carrier domain; that stretch reads VKASLLLHVL…ETFQDTFAGS (76 aa). At Ser181 the chain carries O-(pantetheine 4'-phosphoryl)serine. The beta-ketoacyl reductase stretch occupies residues 675–874; it reads DKYVLITGAG…CGAIIGWTRG (200 aa). The 539-residue stretch at 1119 to 1657 folds into the Ketosynthase family 3 (KS3) domain; sequence KQMIQEVVIE…QKGAQAVAVH (539 aa). Active-site for beta-ketoacyl synthase activity residues include Cys1305, His1542, and His1583. Residues Asp1774, Val1775, and Glu1776 each contribute to the Mg(2+) site. Acetyl-CoA is bound by residues 1774 to 1776, Tyr1800, Ser1810, 1819 to 1829, 1843 to 1846, and 1873 to 1875; these read DVE, EAVFKSLGVKS, REAG, and ISH. 2 residues coordinate Mg(2+): Ser1874 and His1875.

Belongs to the thiolase-like superfamily. Fungal fatty acid synthetase subunit alpha family. As to quaternary structure, fatty acid synthase is composed of alpha and beta subunits.

It catalyses the reaction acetyl-CoA + n malonyl-CoA + 2n NADPH + 4n H(+) = a long-chain-acyl-CoA + n CoA + n CO2 + 2n NADP(+).. The enzyme catalyses a fatty acyl-[ACP] + malonyl-[ACP] + H(+) = a 3-oxoacyl-[ACP] + holo-[ACP] + CO2. It carries out the reaction a (3R)-hydroxyacyl-[ACP] + NADP(+) = a 3-oxoacyl-[ACP] + NADPH + H(+). Functionally, fatty acid synthetase catalyzes the formation of long-chain fatty acids from acetyl-CoA, malonyl-CoA and NADPH. The alpha subunit contains domains for: acyl carrier protein, 3-oxoacyl-[acyl-carrier-protein] reductase, and 3-oxoacyl-[acyl-carrier-protein] synthase. In this species, higher amounts of C18 than C16 fatty acids are produced. This is Fatty acid synthase subunit alpha (FAS2) from Lachancea kluyveri (Yeast).